Here is a 672-residue protein sequence, read N- to C-terminus: tRNA 5-methylaminomethyl-2-thiouridine biosynthesis bifunctional protein MnmC (672 aa).

The tract at residues 1–235 (MTRVLEPAEP…KRDMTVARFA (235 aa)) is tRNA (mnm(5)s(2)U34)-methyltransferase. Residues 259–672 (IGAGLAGCAV…SAGPGVDAAG (414 aa)) form an FAD-dependent cmnm(5)s(2)U34 oxidoreductase region.

It in the N-terminal section; belongs to the methyltransferase superfamily. tRNA (mnm(5)s(2)U34)-methyltransferase family. In the C-terminal section; belongs to the DAO family. The cofactor is FAD.

It localises to the cytoplasm. It carries out the reaction 5-aminomethyl-2-thiouridine(34) in tRNA + S-adenosyl-L-methionine = 5-methylaminomethyl-2-thiouridine(34) in tRNA + S-adenosyl-L-homocysteine + H(+). Its function is as follows. Catalyzes the last two steps in the biosynthesis of 5-methylaminomethyl-2-thiouridine (mnm(5)s(2)U) at the wobble position (U34) in tRNA. Catalyzes the FAD-dependent demodification of cmnm(5)s(2)U34 to nm(5)s(2)U34, followed by the transfer of a methyl group from S-adenosyl-L-methionine to nm(5)s(2)U34, to form mnm(5)s(2)U34. This is tRNA 5-methylaminomethyl-2-thiouridine biosynthesis bifunctional protein MnmC from Cupriavidus metallidurans (strain ATCC 43123 / DSM 2839 / NBRC 102507 / CH34) (Ralstonia metallidurans).